The primary structure comprises 366 residues: Beta sliding clamp (366 aa).

Belongs to the beta sliding clamp family. As to quaternary structure, forms a ring-shaped head-to-tail homodimer around DNA which binds and tethers DNA polymerases and other proteins to the DNA. The DNA replisome complex has a single clamp-loading complex (3 tau and 1 each of delta, delta', psi and chi subunits) which binds 3 Pol III cores (1 core on the leading strand and 2 on the lagging strand) each with a beta sliding clamp dimer. Additional proteins in the replisome are other copies of gamma, psi and chi, Ssb, DNA helicase and RNA primase.

The protein resides in the cytoplasm. Its function is as follows. Confers DNA tethering and processivity to DNA polymerases and other proteins. Acts as a clamp, forming a ring around DNA (a reaction catalyzed by the clamp-loading complex) which diffuses in an ATP-independent manner freely and bidirectionally along dsDNA. Initially characterized for its ability to contact the catalytic subunit of DNA polymerase III (Pol III), a complex, multichain enzyme responsible for most of the replicative synthesis in bacteria; Pol III exhibits 3'-5' exonuclease proofreading activity. The beta chain is required for initiation of replication as well as for processivity of DNA replication. This is Beta sliding clamp (dnaN) from Salmonella typhimurium (strain LT2 / SGSC1412 / ATCC 700720).